Here is a 454-residue protein sequence, read N- to C-terminus: Serine/threonine-protein phosphatase C23G10.1 (454 aa).

4 residues coordinate Mn(2+): D196, H198, D224, and N256. H257 serves as the catalytic Proton donor. The Mn(2+) site is built by H308 and H382.

Belongs to the PPP phosphatase family. PP-1 subfamily. Mn(2+) is required as a cofactor.

It carries out the reaction O-phospho-L-seryl-[protein] + H2O = L-seryl-[protein] + phosphate. The catalysed reaction is O-phospho-L-threonyl-[protein] + H2O = L-threonyl-[protein] + phosphate. The chain is Serine/threonine-protein phosphatase C23G10.1 from Caenorhabditis elegans.